A 1353-amino-acid chain; its full sequence is Adenylate cyclase type 9 (1353 aa).

Disordered stretches follow at residues 1 to 27 (MASS…DSNS) and 51 to 73 (SSSC…GGRL). The Cytoplasmic portion of the chain corresponds to 1 to 117 (MASSPHQQLL…CFPQTQRRFR (117 aa)). The segment covering 16 to 27 (EVSCDSSGDSNS) has biased composition (polar residues). Residues 51–66 (SSSCSSSGDSGGLPRR) show a composition bias toward low complexity. A helical membrane pass occupies residues 118–138 (YALFYVGFACLLWSIYFAVHM). Topologically, residues 139-141 (KSK) are extracellular. Residues 142 to 162 (VIVMVVPALCFLVVCVGFFLF) form a helical membrane-spanning segment. Residues 163–171 (TFTKLYARH) are Cytoplasmic-facing. Residues 172–192 (YAWTSLALTLLVFALTLAAQF) traverse the membrane as a helical segment. Over 193–215 (QVWTPLSGRVDSSNHTLTATPAD) the chain is Extracellular. An N-linked (GlcNAc...) asparagine glycan is attached at asparagine 206. A helical transmembrane segment spans residues 216–235 (TCLSQVGSFSICIEVLLLLY). At 236 to 241 (TVMQLP) the chain is on the cytoplasmic side. The chain crosses the membrane as a helical span at residues 242–259 (LYLSLFLGVVYSVLFETF). At 260 to 280 (GYHFRNEDCYPSPGPGALHWE) the chain is on the extracellular side. Residues 281–301 (LLSRALLHVCIHAIGIHLFVM) traverse the membrane as a helical segment. Topologically, residues 302–786 (SQVRSRSTFL…VKTFASATFS (485 aa)) are cytoplasmic. The disordered stretch occupies residues 349–375 (QGDEESENSVKRHATSSPKNRKKKSSI). Positions 359–374 (KRHATSSPKNRKKKSS) are enriched in basic residues. 3 residues coordinate Mg(2+): aspartate 399, isoleucine 400, and aspartate 443. ATP-binding positions include 399–404 (DIVGFT), 441–443 (LGD), and arginine 487. Disordered regions lie at residues 596–615 (DSRE…GSVS) and 641–685 (SEAG…EEKL). A phosphoserine mark is found at serine 610 and serine 613. Over residues 661–676 (STKASGGPNSKTQNGL) the composition is skewed to polar residues. A phosphoserine mark is found at serine 688, serine 691, and serine 706. Residues 787-807 (SLLDVFLSTTVFLILSITCFL) form a helical membrane-spanning segment. Over 808–818 (KYGATATPPPP) the chain is Extracellular. The chain crosses the membrane as a helical span at residues 819–839 (AALAVFGADLLLEVLSLIVSI). Residues 840–867 (RMVFFLEDVMTCTKWLLEWIAGWLPRHC) lie on the Cytoplasmic side of the membrane. The helical transmembrane segment at 868-888 (IGAILVSLPALAVYSHITSEF) threads the bilayer. The Extracellular segment spans residues 889–891 (ETN). Residues 892 to 912 (IHVTMFTGSAVLVAVVHYCNF) traverse the membrane as a helical segment. Over 913 to 920 (CQLSSWMR) the chain is Cytoplasmic. A helical membrane pass occupies residues 921 to 941 (SSLATIVGAGLLLLLHISLCQ). Over 942 to 975 (DSSIVMSPLDSAQNFSAQRNPCNSSVLQDGRRPA) the chain is Extracellular. Asparagine 955 and asparagine 964 each carry an N-linked (GlcNAc...) asparagine glycan. Residues 976 to 996 (SLIGKELILTFFLLLLLVWFL) form a helical membrane-spanning segment. At 997-1353 (NREFEVSYRL…LSKLNVSKSV (357 aa)) the chain is on the cytoplasmic side. ATP-binding positions include lysine 1108, 1185 to 1187 (DIW), 1192 to 1196 (NIASR), and lysine 1232. Phosphoserine is present on residues serine 1257, serine 1259, serine 1295, serine 1307, and serine 1332. Residues 1290 to 1314 (KASLGSDDSTQAKEARLSSKRSWRE) form a disordered region. The segment covering 1299–1314 (TQAKEARLSSKRSWRE) has biased composition (basic and acidic residues).

The protein belongs to the adenylyl cyclase class-4/guanylyl cyclase family. It depends on Mg(2+) as a cofactor. Mn(2+) serves as cofactor. In terms of tissue distribution, detected in brain, spleen, lung, liver and testis (at protein level). Detected in brain, especially in hippocampus, cerebellum and neocortex. Found in decreasing order in skeletal muscle, heart, adrenal gland, ovary and brain; and to a lesser extent, in kidney, liver, testis, lung, thymus and spleen.

Its subcellular location is the cell membrane. The catalysed reaction is ATP = 3',5'-cyclic AMP + diphosphate. With respect to regulation, insensitive to calcium/calmodulin, forskolin and somatostatin. Stimulated by beta-adrenergic receptor activation. Activity is down-regulated by calcium/calcineurin. Functionally, adenylyl cyclase that catalyzes the formation of the signaling molecule cAMP in response to activation of G protein-coupled receptors. Contributes to signaling cascades activated by CRH (corticotropin-releasing factor), corticosteroids and by beta-adrenergic receptors. This is Adenylate cyclase type 9 (Adcy9) from Mus musculus (Mouse).